We begin with the raw amino-acid sequence, 815 residues long: SNF1 protein kinase subunit beta-1 (815 aa).

Over residues 1 to 11 (MGNSPSTQDPS) the composition is skewed to polar residues. 2 disordered regions span residues 1-88 (MGNS…TIDK) and 120-146 (HDVGAPEEQVKSPSFLSPGPSMATVKR). Glycine 2 carries the N-myristoyl glycine lipid modification. The segment covering 12–31 (HSTKKEHGHHFHDAFNKDRQ) has biased composition (basic and acidic residues). Over residues 32–42 (GSITSQLFNNR) the composition is skewed to polar residues. Serine 33 is subject to Phosphoserine. Composition is skewed to basic and acidic residues over residues 72 to 88 (PSTDCDGRMSSDTTIDK) and 120 to 129 (HDVGAPEEQV). Phosphoserine occurs at positions 181, 198, 200, 206, 209, and 220. 3 disordered regions span residues 311-335 (HANNNGNIENNTRNKGNAGGSNDDF), 363-389 (HHNKTKKAQSKKIRSASNSRRSSFASL), and 410-444 (PLHPIINDNESQYSAPQHREISHHSNSMSSMSSIS). Positions 313 to 326 (NNNGNIENNTRNKG) are enriched in low complexity. Position 331 is a phosphoserine (serine 331). Basic residues predominate over residues 363–376 (HHNKTKKAQSKKIR). Low complexity-rich tracts occupy residues 377-389 (SASNSRRSSFASL) and 433-444 (HSNSMSSMSSIS). The interval 473–716 (VSTDIASALK…LQQGGNIDAE (244 aa)) is kinase-interacting sequence (KIS); required for interaction with SNF1. 2 positions are modified to phosphoserine: serine 494 and serine 497. The interval 581–616 (EPTLDEELPKRPELKRFPSSSRKSSYYSAKGVERPS) is disordered. The segment covering 587 to 596 (ELPKRPELKR) has biased composition (basic and acidic residues). Residues 599–608 (SSSRKSSYYS) show a composition bias toward low complexity. Phosphoserine is present on serine 643. Residues 724-804 (SRYPVPDLPI…FITQVVYAPC (81 aa)) are association with SNF1 kinase complex (ASC) domain; required for interaction with SNF4.

It belongs to the 5'-AMP-activated protein kinase beta subunit family. As to quaternary structure, component of the SNF1 kinase complex, a heterotrimeric complex composed of the catalytic alpha subunit SNF1, one of the three related beta subunits SIP1, SIP2 or GAL83, and the regulatory gamma subunit SNF4. The beta subunit serves as a bridge between the catalytic and the regulatory subunit. Interacts (via KIS domain) with SNF1. Interacts (via ASC domain) with SNF4. Post-translationally, phosphorylated by SNF1 in vitro.

The protein resides in the cytoplasm. Its subcellular location is the vacuole membrane. Beta subunit of the SNF1 kinase complex, which is required for transcriptional, metabolic, and developmental adaptations in response to glucose limitation. Has a structural role, mediating heterotrimer formation, and a regulatory role, defining carbon source-regulated subcellular location and substrate specificity of the SNF1 kinase complex. Promotes the PKA-regulated relocalization of the SNF1 kinase complex to the vacuolar membrane in response to various types of carbon stress. The polypeptide is SNF1 protein kinase subunit beta-1 (SIP1) (Saccharomyces cerevisiae (strain RM11-1a) (Baker's yeast)).